The primary structure comprises 365 residues: Cobalt-precorrin-5B C(1)-methyltransferase (365 aa).

The protein belongs to the CbiD family.

The catalysed reaction is Co-precorrin-5B + S-adenosyl-L-methionine = Co-precorrin-6A + S-adenosyl-L-homocysteine. Its pathway is cofactor biosynthesis; adenosylcobalamin biosynthesis; cob(II)yrinate a,c-diamide from sirohydrochlorin (anaerobic route): step 6/10. Functionally, catalyzes the methylation of C-1 in cobalt-precorrin-5B to form cobalt-precorrin-6A. In Clostridium perfringens (strain ATCC 13124 / DSM 756 / JCM 1290 / NCIMB 6125 / NCTC 8237 / Type A), this protein is Cobalt-precorrin-5B C(1)-methyltransferase.